The sequence spans 954 residues: Glycine dehydrogenase (decarboxylating) (954 aa).

Lys-701 is subject to N6-(pyridoxal phosphate)lysine.

This sequence belongs to the GcvP family. As to quaternary structure, the glycine cleavage system is composed of four proteins: P, T, L and H. Pyridoxal 5'-phosphate is required as a cofactor.

It carries out the reaction N(6)-[(R)-lipoyl]-L-lysyl-[glycine-cleavage complex H protein] + glycine + H(+) = N(6)-[(R)-S(8)-aminomethyldihydrolipoyl]-L-lysyl-[glycine-cleavage complex H protein] + CO2. The glycine cleavage system catalyzes the degradation of glycine. The P protein binds the alpha-amino group of glycine through its pyridoxal phosphate cofactor; CO(2) is released and the remaining methylamine moiety is then transferred to the lipoamide cofactor of the H protein. The chain is Glycine dehydrogenase (decarboxylating) from Bordetella pertussis (strain Tohama I / ATCC BAA-589 / NCTC 13251).